Here is a 335-residue protein sequence, read N- to C-terminus: Serpentine receptor class alpha-13 (335 aa).

Over 1 to 22 the chain is Extracellular; sequence MAIVSSENRTCADEKLLALYQS. Residues 23-43 form a helical membrane-spanning segment; that stretch reads WSYIASIVFNCLVPTISTYFL. Over 44–61 the chain is Cytoplasmic; sequence GRAIFQLCNQATIQYSTR. A helical transmembrane segment spans residues 62-82; that stretch reads ILLIATILFAACHQVSYFAFK. Topologically, residues 83–107 are extracellular; that stretch reads IDLLHTMFFKLDQPCFLQRSSYDCR. The chain crosses the membrane as a helical span at residues 108–128; it reads FISIAQTTGVVGMALTGLAMS. The Cytoplasmic portion of the chain corresponds to 129 to 149; that stretch reads TDRALALTFPADYHKLKSVPR. The helical transmembrane segment at 150 to 170 threads the bilayer; it reads VVLSVFVFIVSFSTWFLLTMN. At 171–192 the chain is on the extracellular side; sequence DPLTGYLNHCGFYPSYSVANFQ. A helical transmembrane segment spans residues 193-213; that stretch reads LMLDVILYLAIFNLIWDVILF. The Cytoplasmic portion of the chain corresponds to 214–235; it reads YYARQQILWRRSYQFQKRYEAR. The chain crosses the membrane as a helical span at residues 236 to 255; that stretch reads ISLNCTQAVFVISICQCISN. The Extracellular segment spans residues 256–278; sequence GANSGLMRLLMMIGTSITSVTYS. Residues 279–299 traverse the membrane as a helical segment; it reads SLLSLFYTAPYSCILLPILMM. Residues 300–335 lie on the Cytoplasmic side of the membrane; the sequence is RISEYIREQRTIGILSLRSEKPGLEEHHQRMRAAWS.

The protein belongs to the nematode receptor-like protein sra family.

Its subcellular location is the membrane. Chemosensory receptor that negatively regulates RAS/MAPK signaling during vulva induction and the negative regulation of olfaction of volitile attractants. Required for the suppression of vulval induction in response to food starvation. Signaling acts through the GPA-5 G-alpha protein subunit. The protein is Serpentine receptor class alpha-13 of Caenorhabditis briggsae.